A 715-amino-acid polypeptide reads, in one-letter code: ATP-dependent zinc metalloprotease YME1L1 (715 aa).

A disordered region spans residues 31–54; sequence VSVNTSASPKQHRDTVAEHEAPSS. The span at 41–52 shows a compositional bias: basic and acidic residues; sequence QHRDTVAEHEAP. The helical transmembrane segment at 238 to 258 threads the bilayer; the sequence is ILFVLLLFGIYGLLKNPFLSV. Residues Val283, Thr325, Gly326, Lys327, Thr328, and Leu329 each coordinate ATP. His541 serves as a coordination point for Zn(2+). Glu542 is an active-site residue. Residues His545 and Asp619 each coordinate Zn(2+).

In the N-terminal section; belongs to the AAA ATPase family. The protein in the C-terminal section; belongs to the peptidase M41 family. Homohexamer; may also form heterohexamers. Exists in several complexes of 600-1100 kDa. Interacts with AFG1L. Requires Zn(2+) as cofactor. Post-translationally, proteolytically processed by mitochondrial processing peptidase (MPP) to generate the mature form. Degraded in an OMA1-dependent manner in response to oxidative stress.

Its subcellular location is the mitochondrion inner membrane. It is found in the mitochondrion. The catalysed reaction is ATP + H2O = ADP + phosphate + H(+). Functionally, ATP-dependent metalloprotease that catalyzes the degradation of folded and unfolded proteins with a suitable degron sequence in the mitochondrial intermembrane region. Plays an important role in regulating mitochondrial morphology and function by cleaving OPA1 at position S2, giving rise to a form of OPA1 that promotes maintenance of normal mitochondrial structure and mitochondrial protein metabolism. Ensures cell proliferation, maintains normal cristae morphology and complex I respiration activity, promotes antiapoptotic activity and protects mitochondria from the accumulation of oxidatively damaged membrane proteins. Required to control the accumulation of nonassembled respiratory chain subunits (NDUFB6, OX4 and ND1). Involved in the mitochondrial adaptation in response to various signals, such as stress or developmental cues, by mediating degradation of mitochondrial proteins to rewire the mitochondrial proteome. Catalyzes degradation of mitochondrial proteins, such as translocases, lipid transfer proteins and metabolic enzymes in response to nutrient starvation in order to limit mitochondrial biogenesis: mechanistically, YME1L is activated by decreased phosphatidylethanolamine levels caused by LPIN1 activity in response to mTORC1 inhibition. Acts as a regulator of adult neural stem cell self-renewal by promoting mitochondrial proteome rewiring, preserving neural stem and progenitor cells self-renewal. Required for normal, constitutive degradation of PRELID1. Catalyzes the degradation of OMA1 in response to membrane depolarization. Mediates degradation of TIMM17A downstream of the integrated stress response (ISR). Catalyzes degradation of MICU1 when MICU1 is not assembled via an interchain disulfide. The chain is ATP-dependent zinc metalloprotease YME1L1 (Yme1l1) from Rattus norvegicus (Rat).